The sequence spans 36 residues: uncharacterized protein (36 aa).

This is an uncharacterized protein from Escherichia coli (strain K12).